An 828-amino-acid chain; its full sequence is Outer membrane usher protein PmfC (828 aa).

The first 28 residues, 1–28, serve as a signal peptide directing secretion; that stretch reads MLIPYSPHTIWKTICATLLLSLAFFSQA.

Belongs to the fimbrial export usher family.

Its subcellular location is the cell outer membrane. Its function is as follows. Involved in the export and assembly of PMF fimbrial subunits across the outer membrane. In Proteus mirabilis (strain HI4320), this protein is Outer membrane usher protein PmfC (pmfC).